The sequence spans 525 residues: Glutamate--cysteine ligase (525 aa).

Belongs to the glutamate--cysteine ligase type 1 family. Type 1 subfamily.

The enzyme catalyses L-cysteine + L-glutamate + ATP = gamma-L-glutamyl-L-cysteine + ADP + phosphate + H(+). It participates in sulfur metabolism; glutathione biosynthesis; glutathione from L-cysteine and L-glutamate: step 1/2. This Vibrio vulnificus (strain YJ016) protein is Glutamate--cysteine ligase.